A 132-amino-acid chain; its full sequence is Small ribosomal subunit protein uS8 (132 aa).

Belongs to the universal ribosomal protein uS8 family. Part of the 30S ribosomal subunit. Contacts proteins S5 and S12.

One of the primary rRNA binding proteins, it binds directly to 16S rRNA central domain where it helps coordinate assembly of the platform of the 30S subunit. The sequence is that of Small ribosomal subunit protein uS8 from Agrobacterium fabrum (strain C58 / ATCC 33970) (Agrobacterium tumefaciens (strain C58)).